The following is a 491-amino-acid chain: MKTFTWTLGVLFFLLVDTGHCRGGQFKIKKINQRRYPRATDGKEEAKKCAYTFLVPEQRITGPICVNTKGQDASTIKDMITRMDLENLKDVLSRQKREIDVLQLVVDVDGNIVNEVKLLRKESRNMNSRVTQLYMQLLHEIIRKRDNSLELSQLENKILNVTTEMLKMATRYRELEVKYASLTDLVNNQSVMITLLEEQCLRIFSRQDTHVSPPLVQVVPQHIPNSQQYTPGLLGGNEIQRDPGYPRDLMPPPDLATSPTKSPFKIPPVTFINEGPFKDCQQAKEAGHSVSGIYMIKPENSNGPMQLWCENSLDPGGWTVIQKRTDGSVNFFRNWENYKKGFGNIDGEYWLGLENIYMLSNQDNYKLLIELEDWSDKKVYAEYSSFRLEPESEFYRLRLGTYQGNAGDSMMWHNGKQFTTLDRDKDMYAGNCAHFHKGGWWYNACAHSNLNGVWYRGGHYRSKHQDGIFWAEYRGGSYSLRAVQMMIKPID.

An N-terminal signal peptide occupies residues M1–G23. A coiled-coil region spans residues I80 to M168. N-linked (GlcNAc...) asparagine glycans are attached at residues N160 and N188. In terms of domain architecture, Fibrinogen C-terminal spans F271 to D491. 2 disulfide bridges follow: C280/C309 and C432/C445.

As to expression, highly expressed in adrenal gland, placenta, thyroid gland, heart, skeletal muscle and small intestine. Weakly expressed in testis, ovary, colon, pancreas, kidney and stomach.

Its subcellular location is the secreted. The chain is Angiopoietin-related protein 1 (ANGPTL1) from Homo sapiens (Human).